The primary structure comprises 256 residues: Hydroxyacylglutathione hydrolase (256 aa).

Positions 56, 58, 60, 61, 114, 133, and 171 each coordinate Zn(2+).

Belongs to the metallo-beta-lactamase superfamily. Glyoxalase II family. In terms of assembly, monomer. Zn(2+) serves as cofactor.

It catalyses the reaction an S-(2-hydroxyacyl)glutathione + H2O = a 2-hydroxy carboxylate + glutathione + H(+). Its pathway is secondary metabolite metabolism; methylglyoxal degradation; (R)-lactate from methylglyoxal: step 2/2. In terms of biological role, thiolesterase that catalyzes the hydrolysis of S-D-lactoyl-glutathione to form glutathione and D-lactic acid. In Rhodobacter capsulatus (Rhodopseudomonas capsulata), this protein is Hydroxyacylglutathione hydrolase.